The chain runs to 180 residues: CASP-like protein 5A1 (180 aa).

At 1–36 (MEVSHPAVHPVAVPPVLTEPPARVRMKDYQGMPGTL) the chain is on the cytoplasmic side. The helical transmembrane segment at 37–57 (GGLALRLGQLGFAVLSFSIMV) threads the bilayer. At 58-67 (STPDFSQVTA) the chain is on the extracellular side. A helical transmembrane segment spans residues 68–88 (FCYLVAATVLQTLWSSITAVV). The Cytoplasmic portion of the chain corresponds to 89 to 102 (DIYALSVRRSLHHS). A helical transmembrane segment spans residues 103 to 123 (LLVGLFAVGDGVTSTLTFAAA). At 124-150 (CATAGITVLIDNDLDECGQNHCGRFEA) the chain is on the extracellular side. Residues 151–171 (AAAMAFLSWIMAAPSFLLAFW) form a helical membrane-spanning segment. The Cytoplasmic segment spans residues 172 to 180 (SFGNKIVCF).

It belongs to the Casparian strip membrane proteins (CASP) family. Homodimer and heterodimers.

It is found in the cell membrane. The polypeptide is CASP-like protein 5A1 (Pteridium aquilinum subsp. aquilinum (Bracken fern)).